The following is a 391-amino-acid chain: Terminal nucleotidyltransferase 5C (391 aa).

This sequence belongs to the TENT family. Interacts with BCCIP and PABPC1; the interaction has no effect on TENT5C poly(A) polymerase function. Interacts with PLK4; this interaction leads to the TENT5C recruitment into the centrosome.

It localises to the nucleus. The protein localises to the cytoplasm. The protein resides in the cytoskeleton. It is found in the microtubule organizing center. Its subcellular location is the centrosome. The enzyme catalyses RNA(n) + ATP = RNA(n)-3'-adenine ribonucleotide + diphosphate. Its function is as follows. Catalyzes the transfer of one adenosine molecule from an ATP to an mRNA poly(A) tail bearing a 3'-OH terminal group and enhances mRNA stability and gene expression. Can also elongate RNA oligos ending with uridine molecule, provided that the sequence is adenosine-rich. Mainly targets mRNAs encoding endoplasmic reticulum-targeted protein. This chain is Terminal nucleotidyltransferase 5C, found in Macaca fascicularis (Crab-eating macaque).